A 478-amino-acid chain; its full sequence is Zinc metalloproteinase/disintegrin VMP-II (478 aa).

Positions 1-20 (MIQVLLVTICLAVFPYQGSS) are cleaved as a signal peptide. The propeptide occupies 21-190 (IILESGNVND…KASQLNLTPE (170 aa)). In terms of domain architecture, Peptidase M12B spans 197 to 393 (RYIELVIVAD…HNPQCMLNEP (197 aa)). Residues Glu-200 and Asp-284 each coordinate Ca(2+). Disulfide bonds link Cys-308–Cys-388, Cys-348–Cys-372, and Cys-350–Cys-355. His-333 serves as a coordination point for Zn(2+). Glu-334 is a catalytic residue. 2 residues coordinate Zn(2+): His-337 and His-343. The Ca(2+) site is built by Cys-388 and Asn-391. The propeptide occupies 394 to 405 (LGTDTVSRNELL). In terms of domain architecture, Disintegrin spans 414–478 (GSPANPCCDA…ADCPRNRFHA (65 aa)). Intrachain disulfides connect Cys-420–Cys-443, Cys-434–Cys-440, Cys-439–Cys-464, and Cys-452–Cys-471. A Cell attachment site motif is present at residues 456-458 (RGD).

The protein belongs to the venom metalloproteinase (M12B) family. P-II subfamily. P-IIe sub-subfamily. As to quaternary structure, heterodimer; disulfide-linked (disintegrin). Zn(2+) serves as cofactor. Expressed by the venom gland.

It is found in the secreted. Functionally, impairs hemostasis in the envenomed animal. Its function is as follows. This recombinant protein inhibits ADP-induced platelet aggregation in whole human blood and this effect is concentration-dependent with an IC(50) of 34 nM. The protein is Zinc metalloproteinase/disintegrin VMP-II of Crotalus viridis viridis (Prairie rattlesnake).